The chain runs to 273 residues: Large ribosomal subunit protein uL2 (273 aa).

A disordered region spans residues 221 to 273 (RGTAMNPVDHPHGGGEGRNFGKHPVSPWGVQTKGKKTRHNKRTDKYIVRRRGK). Over residues 253 to 273 (KGKKTRHNKRTDKYIVRRRGK) the composition is skewed to basic residues.

This sequence belongs to the universal ribosomal protein uL2 family. Part of the 50S ribosomal subunit. Forms a bridge to the 30S subunit in the 70S ribosome.

In terms of biological role, one of the primary rRNA binding proteins. Required for association of the 30S and 50S subunits to form the 70S ribosome, for tRNA binding and peptide bond formation. It has been suggested to have peptidyltransferase activity; this is somewhat controversial. Makes several contacts with the 16S rRNA in the 70S ribosome. This chain is Large ribosomal subunit protein uL2, found in Mannheimia succiniciproducens (strain KCTC 0769BP / MBEL55E).